We begin with the raw amino-acid sequence, 270 residues long: Putative phosphoenolpyruvate synthase regulatory protein (270 aa).

Residue 149–156 coordinates ADP; that stretch reads GVSRSGKT.

This sequence belongs to the pyruvate, phosphate/water dikinase regulatory protein family. PSRP subfamily.

The enzyme catalyses [pyruvate, water dikinase] + ADP = [pyruvate, water dikinase]-phosphate + AMP + H(+). It carries out the reaction [pyruvate, water dikinase]-phosphate + phosphate + H(+) = [pyruvate, water dikinase] + diphosphate. Functionally, bifunctional serine/threonine kinase and phosphorylase involved in the regulation of the phosphoenolpyruvate synthase (PEPS) by catalyzing its phosphorylation/dephosphorylation. The sequence is that of Putative phosphoenolpyruvate synthase regulatory protein from Alteromonas mediterranea (strain DSM 17117 / CIP 110805 / LMG 28347 / Deep ecotype).